The chain runs to 266 residues: MSIIEIIVLALIQGFTEFLPISSSAHLILPSQILGWEDQGLAFDVAVHVGTLIAVVIYFRKEVSSILSAWFKSFGAQGSTDDSKLGWWIILGTIPAAILGLLLKDMIELYLRSAWVIAVTTIIFGLLLWYADAKGKQIKTIYQLNWKTALIIGLAQAVAMIPGTSRSGITMTAGLMLGMNKQSAARFSFLLAIPIISMMGLYYTVELALGDHLVDWSTLLLGVVLSFLSAYVCIYMFLKVIERMGMLPFVIYRLLLGVGLIVFLTL.

A run of 8 helical transmembrane segments spans residues 1–21, 39–59, 83–103, 113–133, 141–161, 189–209, 218–238, and 244–264; these read MSII…FLPI, QGLA…VIYF, SKLG…GLLL, SAWV…YADA, IYQL…VAMI, FLLA…ELAL, TLLL…YMFL, and MGML…IVFL.

The protein belongs to the UppP family.

The protein localises to the cell inner membrane. It catalyses the reaction di-trans,octa-cis-undecaprenyl diphosphate + H2O = di-trans,octa-cis-undecaprenyl phosphate + phosphate + H(+). Functionally, catalyzes the dephosphorylation of undecaprenyl diphosphate (UPP). Confers resistance to bacitracin. This is Undecaprenyl-diphosphatase 1 from Pseudoalteromonas translucida (strain TAC 125).